We begin with the raw amino-acid sequence, 553 residues long: Formate--tetrahydrofolate ligase 2 (553 aa).

63–70 contributes to the ATP binding site; sequence TSAGEGKS.

This sequence belongs to the formate--tetrahydrofolate ligase family.

The enzyme catalyses (6S)-5,6,7,8-tetrahydrofolate + formate + ATP = (6R)-10-formyltetrahydrofolate + ADP + phosphate. Its pathway is one-carbon metabolism; tetrahydrofolate interconversion. The protein is Formate--tetrahydrofolate ligase 2 of Lactobacillus acidophilus (strain ATCC 700396 / NCK56 / N2 / NCFM).